The primary structure comprises 194 residues: dITP/XTP pyrophosphatase (194 aa).

Residue 8–13 participates in substrate binding; the sequence is TSNPGK. The Mg(2+) site is built by E38 and D67. D67 functions as the Proton acceptor in the catalytic mechanism. Substrate contacts are provided by residues S68, 152 to 155, K175, and 180 to 181; these read FGYD and HR.

Belongs to the HAM1 NTPase family. Homodimer. It depends on Mg(2+) as a cofactor.

It catalyses the reaction XTP + H2O = XMP + diphosphate + H(+). The enzyme catalyses dITP + H2O = dIMP + diphosphate + H(+). The catalysed reaction is ITP + H2O = IMP + diphosphate + H(+). Functionally, pyrophosphatase that catalyzes the hydrolysis of nucleoside triphosphates to their monophosphate derivatives, with a high preference for the non-canonical purine nucleotides XTP (xanthosine triphosphate), dITP (deoxyinosine triphosphate) and ITP. Seems to function as a house-cleaning enzyme that removes non-canonical purine nucleotides from the nucleotide pool, thus preventing their incorporation into DNA/RNA and avoiding chromosomal lesions. This chain is dITP/XTP pyrophosphatase, found in Legionella pneumophila (strain Lens).